Here is a 212-residue protein sequence, read N- to C-terminus: Large ribosomal subunit protein uL3 (212 aa).

Residues 129-156 form a disordered region; it reads RRGPMGHGSKNHRAPGSTGAGTTPGRIY. The span at 142 to 153 shows a compositional bias: low complexity; the sequence is APGSTGAGTTPG.

This sequence belongs to the universal ribosomal protein uL3 family. Part of the 50S ribosomal subunit. Forms a cluster with proteins L14 and L19.

In terms of biological role, one of the primary rRNA binding proteins, it binds directly near the 3'-end of the 23S rRNA, where it nucleates assembly of the 50S subunit. The chain is Large ribosomal subunit protein uL3 from Acaryochloris marina (strain MBIC 11017).